A 301-amino-acid chain; its full sequence is Probable alpha-L-glutamate ligase (301 aa).

Positions 104–287 constitute an ATP-grasp domain; sequence LQLLSRKGIG…VAGMIFDFIE (184 aa). Residues lysine 141, 178 to 179, aspartate 187, and 211 to 213 each bind ATP; these read EF and RSN. Residues aspartate 248, glutamate 260, and asparagine 262 each coordinate Mg(2+). Mn(2+) is bound by residues aspartate 248, glutamate 260, and asparagine 262.

This sequence belongs to the RimK family. Mg(2+) is required as a cofactor. It depends on Mn(2+) as a cofactor.

The chain is Probable alpha-L-glutamate ligase from Vibrio parahaemolyticus serotype O3:K6 (strain RIMD 2210633).